Consider the following 450-residue polypeptide: C4-dicarboxylate transport protein (450 aa).

The next 8 membrane-spanning stretches (helical) occupy residues 25–45 (VVFA…YGAA), 56–76 (LIKM…IASM), 90–110 (MAYF…VANV), 162–182 (ILQV…VGDA), 200–220 (LVNI…AFTI), 234–254 (LVLT…GAVA), 319–339 (IYMT…LTLG), and 367–387 (AATL…ILGV).

It belongs to the dicarboxylate/amino acid:cation symporter (DAACS) (TC 2.A.23) family.

It localises to the cell inner membrane. Responsible for the transport of dicarboxylates such as succinate, fumarate, and malate from the periplasm across the membrane. The sequence is that of C4-dicarboxylate transport protein from Acidovorax ebreus (strain TPSY) (Diaphorobacter sp. (strain TPSY)).